Here is a 433-residue protein sequence, read N- to C-terminus: Casein kinase 1-like protein 5 (433 aa).

The 270-residue stretch at 9–278 folds into the Protein kinase domain; sequence FRLGRKIGSG…LKRLFRNLFI (270 aa). ATP is bound by residues 15 to 23 and Lys38; that span reads IGSGSFGEI. The active-site Proton acceptor is the Asp128. The disordered stretch occupies residues 297–433; it reads QSQSGNPQPR…DDVEPQSKAL (137 aa). Positions 342-359 are enriched in basic and acidic residues; sequence LKQKDKNGNDSAIAKDKL. Over residues 362–375 the composition is skewed to low complexity; the sequence is GSLNLGRSEGSSSR. Residue Ser390 is modified to Phosphoserine. Residues 407–423 show a composition bias toward polar residues; it reads INNNAGDETAATPQSNG.

This sequence belongs to the protein kinase superfamily. CK1 Ser/Thr protein kinase family. Casein kinase I subfamily. In terms of assembly, monomer. In terms of processing, autophosphorylated.

Its subcellular location is the cytoplasm. The catalysed reaction is L-seryl-[protein] + ATP = O-phospho-L-seryl-[protein] + ADP + H(+). It catalyses the reaction L-threonyl-[protein] + ATP = O-phospho-L-threonyl-[protein] + ADP + H(+). Functionally, casein kinases are operationally defined by their preferential utilization of acidic proteins such as caseins as substrates. It can phosphorylate a large number of proteins. The chain is Casein kinase 1-like protein 5 from Arabidopsis thaliana (Mouse-ear cress).